The following is a 727-amino-acid chain: MSKRKHESSDSNKKAMKKQQNKIEEEEEEITNTTTTTTTTNNNYNNIKSNLTIDQWIPKKETFSKRYYEILEKRKELPVWKQKEDFIKVIKENQVVILVGETGSGKTTQIPQFVVDAGLIRPGKMVGVTQPRRVAAISVAKRVSEEMDFELGEEVGYSIRFEELSSARTFMKYLTDGMLLRESMSDPTLNKYDVIILDEAHERTLSTDILFGLIKDILKRRKDLKLIVMSATLEAGKFQKYFENAPLIKVPGRLHPVEIFYTEEAAKDYLESAVRTVIDIHTNEGTGDILVFLTGEEEIEDTCAKIQRETRERGLPPMKTLPLYSSLPIYQQSKIFDTCKERKCIVSTNIAETSLTIDGIVFVVDPGFSKQKTYNPRSRVESLLVAPISKASANQRAGRAGRTRPGKCFRLYTEKAFKELMIQQTHPEILRSNLASVVLQLLKLGVVDLVHFDFMDPPVPDTLIRALEVLHYLGALDDEGQLTEIGSIMSEFPLDPQLSKMLIVSAERSCSNEILTIAAMLSAPNCFMRPKDNRIEADSAKKSFDHFDGDHLTMLNVYHSFKKNGEDPTWCYDNFLNHRAIKQADSVRSQLARILTRFKLPLVSGDVNSKFYYENIKKCIAAGFFMQVAKCEKKNIYFTLGDEQSVIFHPSTGLTRRPEFCIYNEFVLTSENYIRTITDVKFDWLLELAPSYFKQKSFPKKTKETIQRAQRLYSGSSSGSSSGSNKK.

The segment at 1 to 41 (MSKRKHESSDSNKKAMKKQQNKIEEEEEEITNTTTTTTTTN) is disordered. Residues 31 to 41 (TNTTTTTTTTN) show a composition bias toward low complexity. The region spanning 87 to 251 (IKVIKENQVV…FENAPLIKVP (165 aa)) is the Helicase ATP-binding domain. 100–107 (GETGSGKT) is an ATP binding site. A DEAH box motif is present at residues 198–201 (DEAH). A Helicase C-terminal domain is found at 273 to 445 (AVRTVIDIHT…SVVLQLLKLG (173 aa)).

The protein belongs to the DEAD box helicase family. DEAH subfamily. DDX15/PRP43 sub-subfamily.

The protein resides in the nucleus. The catalysed reaction is ATP + H2O = ADP + phosphate + H(+). Pre-mRNA processing factor involved in disassembly of spliceosomes after the release of mature mRNA. The polypeptide is Putative ATP-dependent RNA helicase DHX15 (dhx15) (Dictyostelium discoideum (Social amoeba)).